A 1166-amino-acid polypeptide reads, in one-letter code: Myosin-1 (1166 aa).

Positions 1 to 13 (MSQKVTPFMQSLK) are enriched in polar residues. The interval 1–71 (MSQKVTPFMQ…AGDSEDSPYS (71 aa)) is disordered. S14 is modified (phosphoserine). Polar residues predominate over residues 32–45 (NSSGASVRLTNSNV). Residues 112-161 (KKILQSWIQLPNGNWELGKILSTSGEESVISLPEGKVIKVISETLVPANP) form the Myosin N-terminal SH3-like domain. One can recognise a Myosin motor domain in the interval 165–837 (DGVDDLMQLS…QIGVLEDTRN (673 aa)). ATP is bound by residues 256 to 263 (GESGAGKT) and 304 to 312 (NDNSSRFGK). Actin-binding stretches follow at residues 589–623 (LFEKKPLGLLSLLDEESTFPNGTDLTLANKLKQHL) and 717–739 (LFQLMQRLGNTTPHFIRCIKPNN). IQ domains lie at 839 to 868 (TLHGILRVQSSFRGYQARCLLKELKRGISI), 862 to 891 (LKRGISILQSFVRGEKIRKEFAELRRRHKA), 888 to 917 (RHKAAATIQSQVKSKIARIQYKGIADASVV), and 911 to 940 (IADASVVIQSAIRGWLVRRCSGDIGWLKSG). Residues 955-1005 (SVLSELQRRVLKAEAALREKEEENDILQQRLQQYENRWSEYETKMKSMEEI) are a coiled coil. Residues 1030-1065 (ARNSDASVNASDATDWDSSSNQFRSQTSNGVGSRLQ) are disordered. The segment covering 1032 to 1060 (NSDASVNASDATDWDSSSNQFRSQTSNGV) has biased composition (polar residues).

This sequence belongs to the TRAFAC class myosin-kinesin ATPase superfamily. Myosin family. Plant myosin class VIII subfamily. In terms of assembly, homodimer.

The protein resides in the cell junction. It is found in the plasmodesma. The protein localises to the cytoplasm. It localises to the cytoskeleton. Its subcellular location is the phragmoplast. The protein resides in the endosome. It is found in the endoplasmic reticulum. Its function is as follows. Myosin heavy chain that is required for the cell cycle-regulated transport of various organelles and proteins for their segregation. Functions by binding with its tail domain to receptor proteins on organelles and exerting force with its N-terminal motor domain against actin filaments, thereby transporting its cargo along polarized actin cables. Involved in endocytosis via its action in endosomal trafficking. The polypeptide is Myosin-1 (VIII-1) (Arabidopsis thaliana (Mouse-ear cress)).